A 381-amino-acid polypeptide reads, in one-letter code: Beta-lactamase CMY-2 (381 aa).

The signal sequence occupies residues 1-20 (MMKKSLCCALLLTASFSTFA). S84 acts as the Acyl-ester intermediate in catalysis. S84, Q140, Y170, and N172 together coordinate a beta-lactam.

It belongs to the class-C beta-lactamase family.

The enzyme catalyses a beta-lactam + H2O = a substituted beta-amino acid. Its activity is regulated as follows. Inhibited by the beta-lactamase-blocking agents sulbactam, tazobactam, avibactam and 3-aminophenylboronic acid (APB). Class C beta-lactamase which confers resistance to penicillins and cephalosporins. Has nitrocefin-, cefoxitin- and cefoperazone-hydrolyzing activities. This is Beta-lactamase CMY-2 from Klebsiella pneumoniae.